The following is a 301-amino-acid chain: MTLSRDDAAQVAKVLSEALPYIRRFVGKTLVIKYGGNAMESEELKAGFARDVVLMKAVGINPVVVHGGGPQIGDLLKRLSIESHFIDGMRVTDAATMDVVEMVLGGQVNKDIVNLINRHGGSAIGLTGKDAELIRAKKLTVTRQTPEMTKPEIIDIGHVGEVTGVNVGLLNMLVKGDFIPVIAPIGVGSNGESYNINADLVAGKVAEALKAEKLMLLTNIAGLMDKQGQVLTGLSTEQVNELIADGTIYGGMLPKIRCALEAVQGGVTSAHIIDGRVPNAVLLEIFTDSGVGTLISNRKRH.

Substrate is bound by residues 68–69 (GG), arginine 90, and asparagine 195.

This sequence belongs to the acetylglutamate kinase family. ArgB subfamily.

The protein resides in the cytoplasm. It carries out the reaction N-acetyl-L-glutamate + ATP = N-acetyl-L-glutamyl 5-phosphate + ADP. The protein operates within amino-acid biosynthesis; L-arginine biosynthesis; N(2)-acetyl-L-ornithine from L-glutamate: step 2/4. Its function is as follows. Catalyzes the ATP-dependent phosphorylation of N-acetyl-L-glutamate. In Pseudomonas aeruginosa (strain LESB58), this protein is Acetylglutamate kinase.